Here is a 157-residue protein sequence, read N- to C-terminus: Catabolic 3-dehydroquinase (157 aa).

The Proton acceptor role is filled by Y27. N80, H86, and D93 together coordinate substrate. H106 (proton donor) is an active-site residue. Substrate is bound by residues 107 to 108 and R117; that span reads VS.

Belongs to the type-II 3-dehydroquinase family. Homododecamer. Adopts a ring-like structure, composed of an arrangement of two hexameric rings stacked on top of one another.

The enzyme catalyses 3-dehydroquinate = 3-dehydroshikimate + H2O. It functions in the pathway aromatic compound metabolism; 3,4-dihydroxybenzoate biosynthesis; 3,4-dihydroxybenzoate from 3-dehydroquinate: step 1/2. Its function is as follows. Is involved in the catabolism of quinate. Allows the utilization of quinate as carbon source via the beta-ketoadipate pathway. This is Catabolic 3-dehydroquinase from Pyricularia oryzae (strain 70-15 / ATCC MYA-4617 / FGSC 8958) (Rice blast fungus).